We begin with the raw amino-acid sequence, 457 residues long: L-asparaginase-like protein GA18140 (457 aa).

The N-terminal stretch at 1–20 (MRYLCRAQLLSLLLLPLLKA) is a signal peptide. 3 disulfides stabilise this stretch: Cys72–Cys78, Cys172–Cys188, and Cys327–Cys354.

This sequence belongs to the Ntn-hydrolase family.

The protein is L-asparaginase-like protein GA18140 of Drosophila pseudoobscura pseudoobscura (Fruit fly).